Consider the following 181-residue polypeptide: 3-hexulose-6-phosphate isomerase (181 aa).

An SIS domain is found at isoleucine 27–leucine 168. Substrate is bound by residues serine 45 and serine 84–threonine 89. Glutamate 148 (proton acceptor) is an active-site residue.

Belongs to the SIS family. PHI subfamily. As to quaternary structure, homodimer.

The enzyme catalyses D-arabino-hex-3-ulose 6-phosphate = beta-D-fructose 6-phosphate. Its pathway is one-carbon metabolism; formaldehyde assimilation via RuMP pathway; D-fructose 6-phosphate from D-ribulose 5-phosphate and formaldehyde: step 2/2. In terms of biological role, catalyzes the isomerization between 3-hexulose 6-phosphate and fructose 6-phosphate. This Methylomonas aminofaciens protein is 3-hexulose-6-phosphate isomerase (rmpB).